The chain runs to 82 residues: RNA-binding protein Hfq (82 aa).

The Sm domain occupies 9 to 68 (DPFLNTLRKEHVPVSIYLVNGIKLQGKVDSFDQYVIMLKNTVSQMVYKHAISTIVPGRPV).

It belongs to the Hfq family. In terms of assembly, homohexamer.

In terms of biological role, RNA chaperone that binds small regulatory RNA (sRNAs) and mRNAs to facilitate mRNA translational regulation in response to envelope stress, environmental stress and changes in metabolite concentrations. Also binds with high specificity to tRNAs. This chain is RNA-binding protein Hfq, found in Methylococcus capsulatus (strain ATCC 33009 / NCIMB 11132 / Bath).